Consider the following 903-residue polypeptide: Protein translocase subunit SecA (903 aa).

ATP-binding positions include Gln-87, Gly-105–Thr-109, and Asp-512. Zn(2+) contacts are provided by Cys-887, Cys-889, Cys-898, and His-899.

The protein belongs to the SecA family. In terms of assembly, monomer and homodimer. Part of the essential Sec protein translocation apparatus which comprises SecA, SecYEG and auxiliary proteins SecDF-YajC and YidC. The cofactor is Zn(2+).

The protein resides in the cell inner membrane. It is found in the cytoplasm. The enzyme catalyses ATP + H2O + cellular proteinSide 1 = ADP + phosphate + cellular proteinSide 2.. Functionally, part of the Sec protein translocase complex. Interacts with the SecYEG preprotein conducting channel. Has a central role in coupling the hydrolysis of ATP to the transfer of proteins into and across the cell membrane, serving both as a receptor for the preprotein-SecB complex and as an ATP-driven molecular motor driving the stepwise translocation of polypeptide chains across the membrane. This is Protein translocase subunit SecA from Photorhabdus laumondii subsp. laumondii (strain DSM 15139 / CIP 105565 / TT01) (Photorhabdus luminescens subsp. laumondii).